A 214-amino-acid chain; its full sequence is Adenylate kinase (214 aa).

Residue 10-15 participates in ATP binding; the sequence is GAGKGT. The NMP stretch occupies residues 30–59; that stretch reads STGDMLRAAVKAGTELGKQAKEIMDAGKLV. Residues threonine 31, arginine 36, 57 to 59, 85 to 88, and glutamine 92 each bind AMP; these read KLV and GFPR. Residues 122–159 form an LID region; that stretch reads GRRVHAASGRVYHVKFNPPKVEGKDDVTGEDLTIRKDD. Residues arginine 123 and 132–133 contribute to the ATP site; that span reads VY. The AMP site is built by arginine 156 and arginine 167. ATP is bound at residue arginine 200.

Belongs to the adenylate kinase family. In terms of assembly, monomer.

It is found in the cytoplasm. The enzyme catalyses AMP + ATP = 2 ADP. Its pathway is purine metabolism; AMP biosynthesis via salvage pathway; AMP from ADP: step 1/1. In terms of biological role, catalyzes the reversible transfer of the terminal phosphate group between ATP and AMP. Plays an important role in cellular energy homeostasis and in adenine nucleotide metabolism. The chain is Adenylate kinase from Pectobacterium carotovorum subsp. carotovorum (strain PC1).